We begin with the raw amino-acid sequence, 328 residues long: Ketol-acid reductoisomerase (NADP(+)) (328 aa).

Residues 1–181 (MKIYYENDID…GLARAGVLET (181 aa)) enclose the KARI N-terminal Rossmann domain. Residues 24–27 (YGSQ), R47, S52, and 82–85 (DEIQ) contribute to the NADP(+) site. H107 is an active-site residue. NADP(+) is bound at residue G133. Residues 182-327 (TFREETETDL…SKLRKLCGLE (146 aa)) enclose the KARI C-terminal knotted domain. Mg(2+) contacts are provided by D190, E194, E226, and E230. Substrate is bound at residue S251.

This sequence belongs to the ketol-acid reductoisomerase family. Requires Mg(2+) as cofactor.

It catalyses the reaction (2R)-2,3-dihydroxy-3-methylbutanoate + NADP(+) = (2S)-2-acetolactate + NADPH + H(+). It carries out the reaction (2R,3R)-2,3-dihydroxy-3-methylpentanoate + NADP(+) = (S)-2-ethyl-2-hydroxy-3-oxobutanoate + NADPH + H(+). The protein operates within amino-acid biosynthesis; L-isoleucine biosynthesis; L-isoleucine from 2-oxobutanoate: step 2/4. It functions in the pathway amino-acid biosynthesis; L-valine biosynthesis; L-valine from pyruvate: step 2/4. In terms of biological role, involved in the biosynthesis of branched-chain amino acids (BCAA). Catalyzes an alkyl-migration followed by a ketol-acid reduction of (S)-2-acetolactate (S2AL) to yield (R)-2,3-dihydroxy-isovalerate. In the isomerase reaction, S2AL is rearranged via a Mg-dependent methyl migration to produce 3-hydroxy-3-methyl-2-ketobutyrate (HMKB). In the reductase reaction, this 2-ketoacid undergoes a metal-dependent reduction by NADPH to yield (R)-2,3-dihydroxy-isovalerate. The chain is Ketol-acid reductoisomerase (NADP(+)) from Methanothermobacter thermautotrophicus (strain ATCC 29096 / DSM 1053 / JCM 10044 / NBRC 100330 / Delta H) (Methanobacterium thermoautotrophicum).